A 537-amino-acid chain; its full sequence is Tyrosine-protein kinase Fyn (537 aa).

Gly2 carries the N-myristoyl glycine lipid modification. S-palmitoyl cysteine attachment occurs at residues Cys3 and Cys6. A Phosphothreonine; by PKC modification is found at Thr12. The disordered stretch occupies residues 14–35; sequence LTEERDGSLNQSSGYRYGTDPT. Ser21 and Ser26 each carry phosphoserine. The region spanning 82–143 is the SH3 domain; that stretch reads TGVTLFVALY…PSNYVAPVDS (62 aa). One can recognise an SH2 domain in the interval 149 to 246; sequence WYFGKLGRKD…GLCCRLVVPC (98 aa). Tyr185 is modified (phosphotyrosine). In terms of domain architecture, Protein kinase spans 271 to 524; that stretch reads LQLIKRLGNG…YLQGFLEDYF (254 aa). ATP is bound by residues 277–285 and Lys299; that span reads LGNGQFGEV. Catalysis depends on Asp390, which acts as the Proton acceptor. The residue at position 420 (Tyr420) is a Phosphotyrosine; by autocatalysis. Position 531 is a phosphotyrosine; by CSK (Tyr531).

Belongs to the protein kinase superfamily. Tyr protein kinase family. SRC subfamily. In terms of assembly, interacts (via its SH3 domain) with PIK3R1 and PRMT8. Interacts with FYB1, PAG1, and SH2D1A. Interacts with CD79A (tyrosine-phosphorylated form); the interaction increases FYN activity. Interacts (via SH2 domain) with CSF1R (tyrosine phosphorylated). Interacts with TOM1L1 (phosphorylated form). Interacts with KDR (tyrosine phosphorylated). Interacts (via SH3 domain) with KLHL2 (via N-terminus). Interacts with SH2D1A and SLAMF1. Interacts with ITCH; the interaction phosphorylates ITCH and negatively regulates its activity. Interacts with FASLG. Interacts with RUNX3. Interacts with KIT. Interacts with EPHA8; possible downstream effector of EPHA8 in regulation of cell adhesion. Interacts with PTK2/FAK1; this interaction leads to PTK2/FAK1 phosphorylation and activation. Interacts with CAV1; this interaction couples integrins to the Ras-ERK pathway. Interacts with UNC119. Interacts (via SH2 domain) with PTPRH (phosphorylated form). Interacts with PTPRO (phosphorylated form). Interacts with PTPRB (phosphorylated form). Interacts with FYB2. Interacts with DSCAM. Interacts with SKAP1 and FYB1; this interaction promotes the phosphorylation of CLNK. Interacts with NEDD9; in the presence of PTK2. Mn(2+) is required as a cofactor. Post-translationally, autophosphorylated at Tyr-420. Phosphorylation on the C-terminal tail at Tyr-531 by CSK maintains the enzyme in an inactive state. PTPRC/CD45 dephosphorylates Tyr-531 leading to activation. Ultraviolet B (UVB) strongly increase phosphorylation at Thr-12 and kinase activity, and promotes translocation from the cytoplasm to the nucleus. Dephosphorylation at Tyr-420 by PTPN2 negatively regulates T-cell receptor signaling. Phosphorylated at tyrosine residues, which can be enhanced by NTN1. Palmitoylated. Palmitoylation at Cys-3 and Cys-6, probably by ZDHHC21, regulates subcellular location.

It is found in the cytoplasm. Its subcellular location is the nucleus. The protein resides in the cell membrane. The protein localises to the perikaryon. The catalysed reaction is L-tyrosyl-[protein] + ATP = O-phospho-L-tyrosyl-[protein] + ADP + H(+). With respect to regulation, inhibited by phosphorylation of Tyr-531 by leukocyte common antigen and activated by dephosphorylation of this site. Its function is as follows. Non-receptor tyrosine-protein kinase that plays a role in many biological processes including regulation of cell growth and survival, cell adhesion, integrin-mediated signaling, cytoskeletal remodeling, cell motility, immune response and axon guidance. Inactive FYN is phosphorylated on its C-terminal tail within the catalytic domain. Following activation by PKA, the protein subsequently associates with PTK2/FAK1, allowing PTK2/FAK1 phosphorylation, activation and targeting to focal adhesions. Involved in the regulation of cell adhesion and motility through phosphorylation of CTNNB1 (beta-catenin) and CTNND1 (delta-catenin). Regulates cytoskeletal remodeling by phosphorylating several proteins including the actin regulator WAS and the microtubule-associated proteins MAP2 and MAPT. Promotes cell survival by phosphorylating AGAP2/PIKE-A and preventing its apoptotic cleavage. Participates in signal transduction pathways that regulate the integrity of the glomerular slit diaphragm (an essential part of the glomerular filter of the kidney) by phosphorylating several slit diaphragm components including NPHS1, KIRREL1 and TRPC6. Plays a role in neural processes by phosphorylating DPYSL2, a multifunctional adapter protein within the central nervous system, ARHGAP32, a regulator for Rho family GTPases implicated in various neural functions, and SNCA, a small pre-synaptic protein. Involved in reelin signaling by mediating phosphorylation of DAB1 following reelin (RELN)-binding to its receptor. Participates in the downstream signaling pathways that lead to T-cell differentiation and proliferation following T-cell receptor (TCR) stimulation. Phosphorylates PTK2B/PYK2 in response to T-cell receptor activation. Also participates in negative feedback regulation of TCR signaling through phosphorylation of PAG1, thereby promoting interaction between PAG1 and CSK and recruitment of CSK to lipid rafts. CSK maintains LCK and FYN in an inactive form. Promotes CD28-induced phosphorylation of VAV1. In mast cells, phosphorylates CLNK after activation of immunoglobulin epsilon receptor signaling. Can also promote CD244-mediated NK cell activation. The polypeptide is Tyrosine-protein kinase Fyn (Bos taurus (Bovine)).